A 333-amino-acid chain; its full sequence is MIEIDRLVSTDVLNENEALVDRAIRPKRLDEYVGQSHVRDQMQIFIQAAKQRGDALDHLLIFGPPGLGKTTLANIVAHEMGVNLRTTSGPVLEKAGDLAALLTHLEPRDALFIDEIHRLSPVVEEILYPAMEDYQLDIMIGEGPGARSIKLDLPPFTLIGATTRAGSLTSPLRDRFGIVQRLEFYSVPDLEHIVSRSARCLQLPLTKNGAHQLALRSRGTPRIINRLLRRVRDFAEVKGEGKINTEIAIKALEMLNVDKEGLDYMDSKLLLAIIEKFQGGPVGLDNLAAAIGEERETIEDVLEPYLIQQGFIQRTPRGRIATQHAYQHFICGG.

The tract at residues 4 to 185 is large ATPase domain (RuvB-L); sequence IDRLVSTDVL…FGIVQRLEFY (182 aa). ATP contacts are provided by residues isoleucine 24, arginine 25, glycine 66, lysine 69, threonine 70, threonine 71, 132 to 134, arginine 175, tyrosine 185, and arginine 222; that span reads EDY. Threonine 70 is a Mg(2+) binding site. A small ATPAse domain (RuvB-S) region spans residues 186 to 256; sequence SVPDLEHIVS…IAIKALEMLN (71 aa). Positions 259 to 333 are head domain (RuvB-H); it reads KEGLDYMDSK…HAYQHFICGG (75 aa). DNA contacts are provided by arginine 295, arginine 314, and arginine 319.

It belongs to the RuvB family. As to quaternary structure, homohexamer. Forms an RuvA(8)-RuvB(12)-Holliday junction (HJ) complex. HJ DNA is sandwiched between 2 RuvA tetramers; dsDNA enters through RuvA and exits via RuvB. An RuvB hexamer assembles on each DNA strand where it exits the tetramer. Each RuvB hexamer is contacted by two RuvA subunits (via domain III) on 2 adjacent RuvB subunits; this complex drives branch migration. In the full resolvosome a probable DNA-RuvA(4)-RuvB(12)-RuvC(2) complex forms which resolves the HJ.

It localises to the cytoplasm. The enzyme catalyses ATP + H2O = ADP + phosphate + H(+). The RuvA-RuvB-RuvC complex processes Holliday junction (HJ) DNA during genetic recombination and DNA repair, while the RuvA-RuvB complex plays an important role in the rescue of blocked DNA replication forks via replication fork reversal (RFR). RuvA specifically binds to HJ cruciform DNA, conferring on it an open structure. The RuvB hexamer acts as an ATP-dependent pump, pulling dsDNA into and through the RuvAB complex. RuvB forms 2 homohexamers on either side of HJ DNA bound by 1 or 2 RuvA tetramers; 4 subunits per hexamer contact DNA at a time. Coordinated motions by a converter formed by DNA-disengaged RuvB subunits stimulates ATP hydrolysis and nucleotide exchange. Immobilization of the converter enables RuvB to convert the ATP-contained energy into a lever motion, pulling 2 nucleotides of DNA out of the RuvA tetramer per ATP hydrolyzed, thus driving DNA branch migration. The RuvB motors rotate together with the DNA substrate, which together with the progressing nucleotide cycle form the mechanistic basis for DNA recombination by continuous HJ branch migration. Branch migration allows RuvC to scan DNA until it finds its consensus sequence, where it cleaves and resolves cruciform DNA. The polypeptide is Holliday junction branch migration complex subunit RuvB (Hamiltonella defensa subsp. Acyrthosiphon pisum (strain 5AT)).